Consider the following 234-residue polypeptide: Biosynthetic peptidoglycan transglycosylase (234 aa).

A helical membrane pass occupies residues 8–28 (VIGCFAAGVVALNLYFFAAIA).

The protein belongs to the glycosyltransferase 51 family.

Its subcellular location is the cell inner membrane. It carries out the reaction [GlcNAc-(1-&gt;4)-Mur2Ac(oyl-L-Ala-gamma-D-Glu-L-Lys-D-Ala-D-Ala)](n)-di-trans,octa-cis-undecaprenyl diphosphate + beta-D-GlcNAc-(1-&gt;4)-Mur2Ac(oyl-L-Ala-gamma-D-Glu-L-Lys-D-Ala-D-Ala)-di-trans,octa-cis-undecaprenyl diphosphate = [GlcNAc-(1-&gt;4)-Mur2Ac(oyl-L-Ala-gamma-D-Glu-L-Lys-D-Ala-D-Ala)](n+1)-di-trans,octa-cis-undecaprenyl diphosphate + di-trans,octa-cis-undecaprenyl diphosphate + H(+). Its pathway is cell wall biogenesis; peptidoglycan biosynthesis. Its function is as follows. Peptidoglycan polymerase that catalyzes glycan chain elongation from lipid-linked precursors. In Ralstonia nicotianae (strain ATCC BAA-1114 / GMI1000) (Ralstonia solanacearum), this protein is Biosynthetic peptidoglycan transglycosylase.